The chain runs to 274 residues: Octanoyltransferase LipM (274 aa).

The region spanning 32 to 244 is the BPL/LPL catalytic domain; that stretch reads GEVPPTLRFY…GFARALGLTL (213 aa). Cys146 functions as the Acyl-thioester intermediate in the catalytic mechanism.

The protein belongs to the octanoyltransferase LipM family. In terms of assembly, monomer.

The catalysed reaction is octanoyl-[ACP] + L-lysyl-[protein] = N(6)-octanoyl-L-lysyl-[protein] + holo-[ACP] + H(+). It participates in protein modification; protein lipoylation via endogenous pathway; protein N(6)-(lipoyl)lysine from octanoyl-[acyl-carrier-protein]. Catalyzes the transfer of endogenously produced octanoic acid from octanoyl-acyl-carrier-protein onto the lipoyl domain of GcvH, an intermediate carrier during protein lipoylation. This chain is Octanoyltransferase LipM, found in Symbiobacterium thermophilum (strain DSM 24528 / JCM 14929 / IAM 14863 / T).